The sequence spans 248 residues: MRTAIIAGNWKMNKTVKEAVELVKELKPLVKDAKCDVVVCPTYVCLPAVLEEVKGSNIKVGAQNMHFEESGAYTGEIAPKMLEELGVHYVIIGHSERRQYFNETDETVNKKVKKAFEHNLIPIVCCGESLEEREGNITEKVLEGQIKVGLKELSKEQVEKLVIAYEPIWAIGTGKTATDEQANETIGYIRTVVKAMYGESVADKIRIQYGGSVKPGTIKAQMAKEEIDGALVGGASLKAEDFAAIVNY.

9–11 (NWK) contributes to the substrate binding site. The active-site Electrophile is His94. Glu166 (proton acceptor) is an active-site residue. Substrate contacts are provided by residues Gly172, Ser212, and 233–234 (GG).

This sequence belongs to the triosephosphate isomerase family. In terms of assembly, homodimer.

Its subcellular location is the cytoplasm. It carries out the reaction D-glyceraldehyde 3-phosphate = dihydroxyacetone phosphate. Its pathway is carbohydrate biosynthesis; gluconeogenesis. The protein operates within carbohydrate degradation; glycolysis; D-glyceraldehyde 3-phosphate from glycerone phosphate: step 1/1. In terms of biological role, involved in the gluconeogenesis. Catalyzes stereospecifically the conversion of dihydroxyacetone phosphate (DHAP) to D-glyceraldehyde-3-phosphate (G3P). This is Triosephosphate isomerase from Clostridium botulinum (strain ATCC 19397 / Type A).